The sequence spans 585 residues: MHAHNAATLTLRSLLNCVAREFPDHVRWLETQGHLRFMLTFPEGGGSLGLPAHYRSATGHHLFGEPVMLTDENGAKTVDAVEAISAVIERLEPSIAAKDGRVDLLNRTHSSRLLIEAALHARNGDLAALAGDEVSFVAAEQGLIAGHGIHPCPKSREGMTEAESRRYSPEFAAGFPLRWFAVESELFHTGHSQGSPSAEEWLKEAMGSDIDALKAPLPAGDFSLLPVHPWQADQMLKDPTVAALVAAGRMIDCGEAGKPWFPTSSVRTLYRPDASFMLKMSLGVGITNSVRVNLARELLRGDDMYRFRRHELWQDFSRSYPGLTLIPDPAFMGVKIDGALIDGLSVSMRENPFTGANADRNVSLLAAVCEHLPDRGSRLGALIRNRAHLERRPLDIVARDWFERFLTIFVRPIFGLYLRHGIAMEAHQQNIVVEIEHGYPIGLFYRDNQGFFHHERAHGALVEALPGFGEPSESVFGEEPVDERLLYYAFINSVLGMVGALGREGLVSETALLAMLRRELLRLEALEGANSGIVRKMLAPTLQCKANLKTRLARMDELVGPLETQSVYLQITNPLFETEKVLAHA.

The protein belongs to the IucA/IucC family.

Its pathway is siderophore biosynthesis; rhizobactin biosynthesis. The sequence is that of Rhizobactin siderophore biosynthesis protein RhbC (rhbC) from Rhizobium meliloti (strain 1021) (Ensifer meliloti).